A 450-amino-acid chain; its full sequence is UDP-N-acetylmuramoylalanine--D-glutamate ligase (450 aa).

Position 119 to 125 (119 to 125 (GSNGKTT)) interacts with ATP.

It belongs to the MurCDEF family.

It localises to the cytoplasm. It carries out the reaction UDP-N-acetyl-alpha-D-muramoyl-L-alanine + D-glutamate + ATP = UDP-N-acetyl-alpha-D-muramoyl-L-alanyl-D-glutamate + ADP + phosphate + H(+). Its pathway is cell wall biogenesis; peptidoglycan biosynthesis. Cell wall formation. Catalyzes the addition of glutamate to the nucleotide precursor UDP-N-acetylmuramoyl-L-alanine (UMA). The sequence is that of UDP-N-acetylmuramoylalanine--D-glutamate ligase from Streptococcus pneumoniae (strain Hungary19A-6).